We begin with the raw amino-acid sequence, 207 residues long: 2,3-bisphosphoglycerate-dependent phosphoglycerate mutase (207 aa).

Substrate contacts are provided by residues 10–17, 23–24, arginine 62, 89–92, lysine 100, 116–117, and 160–161; these read RHGQSEWN, TG, ERDY, RR, and GN. Catalysis depends on histidine 11, which acts as the Tele-phosphohistidine intermediate. Catalysis depends on glutamate 89, which acts as the Proton donor/acceptor.

This sequence belongs to the phosphoglycerate mutase family. BPG-dependent PGAM subfamily. Homodimer.

The catalysed reaction is (2R)-2-phosphoglycerate = (2R)-3-phosphoglycerate. Its pathway is carbohydrate degradation; glycolysis; pyruvate from D-glyceraldehyde 3-phosphate: step 3/5. Functionally, catalyzes the interconversion of 2-phosphoglycerate and 3-phosphoglycerate. The polypeptide is 2,3-bisphosphoglycerate-dependent phosphoglycerate mutase (Xanthobacter autotrophicus (strain ATCC BAA-1158 / Py2)).